We begin with the raw amino-acid sequence, 661 residues long: UvrABC system protein B (661 aa).

The Helicase ATP-binding domain maps to 28 to 414 (DGVNERKRHQ…HTDEMVEQII (387 aa)). 41–48 (GATGTGKT) is an ATP binding site. Residues 94–117 (YYDYYQPEAYVPSTDTFIEKDASI) carry the Beta-hairpin motif. Residues 432-598 (QIDDLLSEIQ…TINKKIHDVI (167 aa)) form the Helicase C-terminal domain. A disordered region spans residues 603–624 (ESDETNQQQQTELPKKMTKKER). The UVR domain occupies 625–660 (QKTIENIEKEMKKAAKDLDFEKATELRDMLFELKAE).

The protein belongs to the UvrB family. As to quaternary structure, forms a heterotetramer with UvrA during the search for lesions. Interacts with UvrC in an incision complex.

It localises to the cytoplasm. In terms of biological role, the UvrABC repair system catalyzes the recognition and processing of DNA lesions. A damage recognition complex composed of 2 UvrA and 2 UvrB subunits scans DNA for abnormalities. Upon binding of the UvrA(2)B(2) complex to a putative damaged site, the DNA wraps around one UvrB monomer. DNA wrap is dependent on ATP binding by UvrB and probably causes local melting of the DNA helix, facilitating insertion of UvrB beta-hairpin between the DNA strands. Then UvrB probes one DNA strand for the presence of a lesion. If a lesion is found the UvrA subunits dissociate and the UvrB-DNA preincision complex is formed. This complex is subsequently bound by UvrC and the second UvrB is released. If no lesion is found, the DNA wraps around the other UvrB subunit that will check the other stand for damage. This Staphylococcus epidermidis (strain ATCC 12228 / FDA PCI 1200) protein is UvrABC system protein B.